We begin with the raw amino-acid sequence, 381 residues long: tRNA-cytidine(32) 2-sulfurtransferase (381 aa).

Residues 101-106 carry the PP-loop motif motif; that stretch reads SGGKDS. [4Fe-4S] cluster contacts are provided by cysteine 176, cysteine 179, and cysteine 267.

It belongs to the TtcA family. In terms of assembly, homodimer. The cofactor is Mg(2+). [4Fe-4S] cluster serves as cofactor.

The protein localises to the cytoplasm. The catalysed reaction is cytidine(32) in tRNA + S-sulfanyl-L-cysteinyl-[cysteine desulfurase] + AH2 + ATP = 2-thiocytidine(32) in tRNA + L-cysteinyl-[cysteine desulfurase] + A + AMP + diphosphate + H(+). Its pathway is tRNA modification. Functionally, catalyzes the ATP-dependent 2-thiolation of cytidine in position 32 of tRNA, to form 2-thiocytidine (s(2)C32). The sulfur atoms are provided by the cysteine/cysteine desulfurase (IscS) system. The chain is tRNA-cytidine(32) 2-sulfurtransferase from Psychrobacter arcticus (strain DSM 17307 / VKM B-2377 / 273-4).